Reading from the N-terminus, the 2254-residue chain is Genome polyprotein (2254 aa).

One can recognise an SF3 helicase domain in the interval 438–592; the sequence is QTTINELAQL…EQWLVDNPGR (155 aa). 464–471 is an ATP binding site; that stretch reads GPPGIGKT. An O-(5'-phospho-RNA)-tyrosine modification is found at Y956. The Peptidase C24 domain maps to 1041 to 1196; it reads GDTYDSEGRG…KKLVSRVQTK (156 aa). Catalysis depends on for 3CLpro activity residues H1078, D1099, and C1163. One can recognise a RdRp catalytic domain in the interval 1434-1559; the sequence is RVLYCLDYSK…GLTPATASIM (126 aa). The disordered stretch occupies residues 1714-1742; the sequence is PAPTRSVASNPEGTQNSNESRPVQPAGPM. A compositionally biased stretch (polar residues) spans 1719-1734; it reads SVASNPEGTQNSNESR.

As to quaternary structure, homodimer. Homomultimer. In terms of assembly, interacts with host IEF4E; this interaction plays a role in translation of viral proteins. In terms of processing, specific enzymatic cleavages in vivo yield mature proteins. Pro-Pol is first autocatalytically cleaved, then processes the whole polyprotein. Post-translationally, VPg is uridylylated by the polymerase and is covalently attached to the 5'-end of the polyadenylated genomic and subgenomic RNAs. This uridylylated form acts as a nucleotide-peptide primer for the polymerase.

Its subcellular location is the virion. It localises to the host cytoplasm. The catalysed reaction is a ribonucleoside 5'-triphosphate + H2O = a ribonucleoside 5'-diphosphate + phosphate + H(+). The enzyme catalyses RNA(n) + a ribonucleoside 5'-triphosphate = RNA(n+1) + diphosphate. It catalyses the reaction Endopeptidase with a preference for cleavage when the P1 position is occupied by Glu-|-Xaa and the P1' position is occupied by Gly-|-Yaa.. Together with NTPase and NS4, initiates the formation of the replication complex. Induces the proliferation of the host smooth ER membranes forming long tubular structures. These remodeled membranes probably form the viral factories that contain the replication complex. Its function is as follows. Displays NTPase activity, but no helicase activity. Induces the formation of convoluted membranes derived from the host ER. These remodeled membranes probably form the viral factories that contain the replication complex. Together with NS2 and NS4, initiates the formation of the replication complex. In terms of biological role, probable key protein responsible for the formation of membrane alterations by the virus. Induces the formation of convoluted membranes derived from the host ER. These remodeled membranes probably form the viral factories that contain the replication complex. Together with NS2 and NTPase, initiates the formation of the replication complex. Functionally, viral genome-linked protein is covalently linked to the 5'-end of the positive-strand, negative-strand genomic RNAs and subgenomic RNA. Acts as a genome-linked replication primer. May recruit ribosome to viral RNA thereby promoting viral proteins translation. Interacts with host translation initiation complex to allow the translation of viral proteins. Protease-polymerase p76 processes the polyprotein: Pro-Pol is first released by autocleavage, then all other proteins are cleaved. Cleaves host translation initiation factor eIF4G1, eIF4G2 and PABP1 thereby inducing a shutdown of host protein synthesis. This shutdown may not prevent viral mRNA from being translated since viral Vpg replaces the cap. It is also an RNA-directed RNA polymerase which replicates genomic and antigenomic viral RNA by recognizing specific signals. Also transcribes a subgenomic mRNA by initiating RNA synthesis internally on antigenomic RNA. This sgRNA codes for structural proteins. Catalyzes the covalent attachment VPg with viral RNAs. Its function is as follows. Capsid protein self assembles to form an icosahedral capsid with a T=3 symmetry, about 38 nm in diameter, and consisting of 180 capsid proteins. The capsid encapsulate the genomic RNA and VP2 proteins. Attaches virion to target cells, inducing endocytosis of the viral particle. Acidification of the endosome induces conformational change of capsid protein thereby injecting virus genomic RNA into host cytoplasm. The sequence is that of Genome polyprotein from Porcine enteric sapovirus (isolate Swine/United States/Cowden/1980) (Sw/SV/Cowden/1980/US).